The sequence spans 185 residues: Ribosome-recycling factor (185 aa).

The protein belongs to the RRF family.

It is found in the cytoplasm. Responsible for the release of ribosomes from messenger RNA at the termination of protein biosynthesis. May increase the efficiency of translation by recycling ribosomes from one round of translation to another. The polypeptide is Ribosome-recycling factor (Treponema denticola (strain ATCC 35405 / DSM 14222 / CIP 103919 / JCM 8153 / KCTC 15104)).